The sequence spans 256 residues: Protein TV0584 (256 aa).

The protein belongs to the CinA family.

The chain is Protein TV0584 from Thermoplasma volcanium (strain ATCC 51530 / DSM 4299 / JCM 9571 / NBRC 15438 / GSS1).